The following is a 150-amino-acid chain: Ribosomal RNA large subunit methyltransferase H (150 aa).

S-adenosyl-L-methionine is bound by residues Ala100 and 118-123 (LSEMTF).

This sequence belongs to the RNA methyltransferase RlmH family. Homodimer.

It is found in the cytoplasm. The catalysed reaction is pseudouridine(1915) in 23S rRNA + S-adenosyl-L-methionine = N(3)-methylpseudouridine(1915) in 23S rRNA + S-adenosyl-L-homocysteine + H(+). In terms of biological role, specifically methylates the pseudouridine at position 1915 (m3Psi1915) in 23S rRNA. The chain is Ribosomal RNA large subunit methyltransferase H from Helicobacter pylori (strain Shi470).